A 232-amino-acid chain; its full sequence is Cytidylate kinase (232 aa).

ATP is bound at residue 15-23 (GPAGAGKST). The disordered stretch occupies residues 164 to 192 (KEDPPPISQGQLAAEMKERDMRDSTRADA). Basic and acidic residues predominate over residues 178–189 (EMKERDMRDSTR).

Belongs to the cytidylate kinase family. Type 1 subfamily.

The protein resides in the cytoplasm. It carries out the reaction CMP + ATP = CDP + ADP. The enzyme catalyses dCMP + ATP = dCDP + ADP. The sequence is that of Cytidylate kinase from Solibacter usitatus (strain Ellin6076).